The chain runs to 239 residues: Thymidylate kinase (239 aa).

ATP is bound at residue 10 to 17 (GINGVGKS).

The protein belongs to the thymidylate kinase family.

The enzyme catalyses dTMP + ATP = dTDP + ADP. Its pathway is pyrimidine metabolism; dTTP biosynthesis. Its function is as follows. Catalyzes the conversion of dTMP to dTDP. The protein is Thymidylate kinase (TMK) of African swine fever virus (isolate Warthog/Namibia/Wart80/1980) (ASFV).